Reading from the N-terminus, the 448-residue chain is Probable glycine dehydrogenase (decarboxylating) subunit 1 (448 aa).

The protein belongs to the GcvP family. N-terminal subunit subfamily. The glycine cleavage system is composed of four proteins: P, T, L and H. In this organism, the P 'protein' is a heterodimer of two subunits.

It carries out the reaction N(6)-[(R)-lipoyl]-L-lysyl-[glycine-cleavage complex H protein] + glycine + H(+) = N(6)-[(R)-S(8)-aminomethyldihydrolipoyl]-L-lysyl-[glycine-cleavage complex H protein] + CO2. Functionally, the glycine cleavage system catalyzes the degradation of glycine. The P protein binds the alpha-amino group of glycine through its pyridoxal phosphate cofactor; CO(2) is released and the remaining methylamine moiety is then transferred to the lipoamide cofactor of the H protein. The sequence is that of Probable glycine dehydrogenase (decarboxylating) subunit 1 from Caulobacter vibrioides (strain ATCC 19089 / CIP 103742 / CB 15) (Caulobacter crescentus).